The primary structure comprises 609 residues: Protein NRT1/ PTR FAMILY 7.1 (609 aa).

2 consecutive transmembrane segments (helical) span residues 67-87 (IILL…GVNL) and 109-129 (WTGT…SYWG). At Thr133 the chain carries Phosphothreonine. A run of 10 helical transmembrane segments spans residues 136-156 (IFQV…WFFL), 173-193 (SSLG…GYGG), 216-236 (FFSY…TILV), 243-263 (LWTE…VAFL), 367-387 (PIWL…SLFV), 402-422 (IPAA…TGIY), 438-458 (MGIG…TEIQ), 474-494 (ILWQ…MYVG), 516-536 (MASM…VMAI), and 559-579 (FYFL…IFAK).

The protein belongs to the major facilitator superfamily. Proton-dependent oligopeptide transporter (POT/PTR) (TC 2.A.17) family. In terms of tissue distribution, expressed in flowers.

The protein resides in the membrane. The sequence is that of Protein NRT1/ PTR FAMILY 7.1 (NPF7.1) from Arabidopsis thaliana (Mouse-ear cress).